The sequence spans 515 residues: Bifunctional purine biosynthesis protein PurH (515 aa).

Residues 1 to 145 (MTKRALISVS…KNHASVTVVV (145 aa)) enclose the MGS-like domain.

The protein belongs to the PurH family.

The enzyme catalyses (6R)-10-formyltetrahydrofolate + 5-amino-1-(5-phospho-beta-D-ribosyl)imidazole-4-carboxamide = 5-formamido-1-(5-phospho-D-ribosyl)imidazole-4-carboxamide + (6S)-5,6,7,8-tetrahydrofolate. It catalyses the reaction IMP + H2O = 5-formamido-1-(5-phospho-D-ribosyl)imidazole-4-carboxamide. Its pathway is purine metabolism; IMP biosynthesis via de novo pathway; 5-formamido-1-(5-phospho-D-ribosyl)imidazole-4-carboxamide from 5-amino-1-(5-phospho-D-ribosyl)imidazole-4-carboxamide (10-formyl THF route): step 1/1. The protein operates within purine metabolism; IMP biosynthesis via de novo pathway; IMP from 5-formamido-1-(5-phospho-D-ribosyl)imidazole-4-carboxamide: step 1/1. This is Bifunctional purine biosynthesis protein PurH from Streptococcus agalactiae serotype III (strain NEM316).